A 735-amino-acid polypeptide reads, in one-letter code: Ion-translocating oxidoreductase complex subunit C (735 aa).

4Fe-4S ferredoxin-type domains are found at residues 368 to 397 and 407 to 436; these read MGAP…QQLY and KATA…VQYF. Residues cysteine 377, cysteine 380, cysteine 383, cysteine 387, cysteine 416, cysteine 419, cysteine 422, and cysteine 426 each coordinate [4Fe-4S] cluster. Residues 538 to 715 form a disordered region; the sequence is KQAAHPMADS…PADPRKAAVA (178 aa). The segment covering 556–565 has biased composition (low complexity); sequence KAAVEAAIAR.

Belongs to the 4Fe4S bacterial-type ferredoxin family. RnfC subfamily. In terms of assembly, the complex is composed of six subunits: RsxA, RsxB, RsxC, RsxD, RsxE and RsxG. [4Fe-4S] cluster is required as a cofactor.

It is found in the cell inner membrane. In terms of biological role, part of a membrane-bound complex that couples electron transfer with translocation of ions across the membrane. Required to maintain the reduced state of SoxR. The sequence is that of Ion-translocating oxidoreductase complex subunit C from Salmonella typhimurium (strain LT2 / SGSC1412 / ATCC 700720).